A 124-amino-acid polypeptide reads, in one-letter code: Small ribosomal subunit protein eS25 (124 aa).

A compositionally biased stretch (basic and acidic residues) spans Met-1–Val-22. A disordered region spans residues Met-1–Gly-37. The span at Gly-27–Gly-37 shows a compositional bias: basic residues.

Belongs to the eukaryotic ribosomal protein eS25 family. In terms of assembly, component of the small ribosomal subunit.

The protein resides in the cytoplasm. Component of the small ribosomal subunit. The ribosome is a large ribonucleoprotein complex responsible for the synthesis of proteins in the cell. The protein is Small ribosomal subunit protein eS25 (rps25) of Danio rerio (Zebrafish).